The sequence spans 507 residues: ATP synthase subunit alpha, chloroplastic (507 aa).

170–177 (GDRQTGKT) contacts ATP.

The protein belongs to the ATPase alpha/beta chains family. F-type ATPases have 2 components, CF(1) - the catalytic core - and CF(0) - the membrane proton channel. CF(1) has five subunits: alpha(3), beta(3), gamma(1), delta(1), epsilon(1). CF(0) has four main subunits: a, b, b' and c.

It is found in the plastid. The protein localises to the chloroplast thylakoid membrane. The catalysed reaction is ATP + H2O + 4 H(+)(in) = ADP + phosphate + 5 H(+)(out). Functionally, produces ATP from ADP in the presence of a proton gradient across the membrane. The alpha chain is a regulatory subunit. The protein is ATP synthase subunit alpha, chloroplastic of Dioscorea elephantipes (Elephant's foot yam).